Consider the following 91-residue polypeptide: uncharacterized protein (91 aa).

The first 20 residues, 1–20 (MFSRVLALLAVLLLSANTWA), serve as a signal peptide directing secretion.

The protein belongs to the BhsA/McbA family.

It localises to the periplasm. This is an uncharacterized protein from Escherichia coli O157:H7.